The sequence spans 544 residues: Thermosome subunit (544 aa).

This sequence belongs to the TCP-1 chaperonin family. In terms of assembly, forms an oligomeric complex of eight-membered rings.

Its function is as follows. Molecular chaperone; binds unfolded polypeptides in vitro, and has a weak ATPase activity. This chain is Thermosome subunit (ths), found in Methanothermococcus thermolithotrophicus (Methanococcus thermolithotrophicus).